A 1320-amino-acid polypeptide reads, in one-letter code: Inner centromere protein A (1320 aa).

Disordered regions lie at residues K53–S75, Q426–V447, N611–P679, E701–S877, and T896–E1215. Low complexity-rich tracts occupy residues N54–S75, Q429–V447, and Q615–S640. Positions Q221–Q444 form a coiled coil. Residues T653 to L668 are compositionally biased toward polar residues. The segment covering N669–P679 has biased composition (low complexity). Residues A683–L855 adopt a coiled-coil conformation. Residues E701–K835 are compositionally biased toward basic and acidic residues. Residues V851–R863 are compositionally biased toward polar residues. Over residues S864–S877 the composition is skewed to low complexity. 2 stretches are compositionally biased toward acidic residues: residues D908–E926 and Q934–E951. Positions N965–N977 are enriched in low complexity. Basic and acidic residues predominate over residues Q981–N1000. Composition is skewed to low complexity over residues S1026 to S1040 and S1047 to S1061. Residues N1062 to T1071 show a composition bias toward polar residues. The span at N1072 to S1096 shows a compositional bias: low complexity. Positions S1120–K1136 are enriched in polar residues. The segment covering N1143–D1154 has biased composition (low complexity). Residues S1155 to E1170 are compositionally biased toward acidic residues. Positions P1175–E1187 are enriched in polar residues. Over residues N1188–N1198 the composition is skewed to low complexity. A compositionally biased stretch (polar residues) spans T1199–S1209.

Belongs to the INCENP family. As to quaternary structure, interacts with aurK.

The protein resides in the chromosome. It localises to the centromere. Its subcellular location is the cytoplasm. The protein localises to the cytoskeleton. It is found in the spindle. The protein resides in the nucleus. It localises to the cleavage furrow. In terms of biological role, chromosomal passenger protein that seems to be required for chromosome segregation and the onset of cytokinesis during mitosis. Plays a key role in the abscission of daughter cells at the end of cytokinesis and in the establishment or maintenance of a bipolar spindle. The protein is Inner centromere protein A (icpA) of Dictyostelium discoideum (Social amoeba).